Reading from the N-terminus, the 130-residue chain is Small ribosomal subunit protein uS9 (130 aa).

The protein belongs to the universal ribosomal protein uS9 family.

This is Small ribosomal subunit protein uS9 from Pseudomonas putida (strain ATCC 700007 / DSM 6899 / JCM 31910 / BCRC 17059 / LMG 24140 / F1).